The following is a 303-amino-acid chain: Dihydroorotate dehydrogenase B (NAD(+)), catalytic subunit (303 aa).

Residues Lys46, 70-74 (NAIGL), and Asn124 contribute to the substrate site. 46–47 (KS) provides a ligand contact to FMN. Residue Asn124 coordinates FMN. Catalysis depends on Cys127, which acts as the Nucleophile. FMN contacts are provided by Lys163 and Ile189. 190–191 (NS) is a binding site for substrate. FMN contacts are provided by residues Gly216, 242–243 (GG), and 264–265 (GT).

The protein belongs to the dihydroorotate dehydrogenase family. Type 1 subfamily. In terms of assembly, heterotetramer of 2 PyrK and 2 PyrD type B subunits. The cofactor is FMN.

It is found in the cytoplasm. It carries out the reaction (S)-dihydroorotate + NAD(+) = orotate + NADH + H(+). It participates in pyrimidine metabolism; UMP biosynthesis via de novo pathway; orotate from (S)-dihydroorotate (NAD(+) route): step 1/1. In terms of biological role, catalyzes the conversion of dihydroorotate to orotate with NAD(+) as electron acceptor. This is Dihydroorotate dehydrogenase B (NAD(+)), catalytic subunit (pyrD) from Methanothermobacter thermautotrophicus (strain ATCC 29096 / DSM 1053 / JCM 10044 / NBRC 100330 / Delta H) (Methanobacterium thermoautotrophicum).